A 62-amino-acid polypeptide reads, in one-letter code: Sperm protamine P1 (62 aa).

Positions 1–62 are disordered; sequence MARYRHSRSR…RYSRRRRRRY (62 aa).

This sequence belongs to the protamine P1 family. In terms of tissue distribution, testis.

The protein resides in the nucleus. It localises to the chromosome. In terms of biological role, protamines substitute for histones in the chromatin of sperm during the haploid phase of spermatogenesis. They compact sperm DNA into a highly condensed, stable and inactive complex. The protein is Sperm protamine P1 (PRM1) of Dendrolagus dorianus (Doria's tree-kangaroo).